Consider the following 565-residue polypeptide: NAD-dependent malic enzyme (565 aa).

Catalysis depends on tyrosine 104, which acts as the Proton donor. Residue arginine 157 coordinates NAD(+). The active-site Proton acceptor is the lysine 175. Glutamate 246, aspartate 247, and aspartate 270 together coordinate a divalent metal cation. 2 residues coordinate NAD(+): aspartate 270 and asparagine 418.

It belongs to the malic enzymes family. As to quaternary structure, homotetramer. The cofactor is Mg(2+). It depends on Mn(2+) as a cofactor.

The enzyme catalyses (S)-malate + NAD(+) = pyruvate + CO2 + NADH. It carries out the reaction oxaloacetate + H(+) = pyruvate + CO2. This Yersinia pseudotuberculosis serotype O:1b (strain IP 31758) protein is NAD-dependent malic enzyme.